Consider the following 432-residue polypeptide: Peptidase B (432 aa).

Positions 196 and 201 each coordinate Mn(2+). K208 is a catalytic residue. Mn(2+) is bound by residues D219, D278, and E280. The active site involves R282.

It belongs to the peptidase M17 family. As to quaternary structure, homohexamer. Mn(2+) serves as cofactor.

It localises to the cytoplasm. It catalyses the reaction Release of an N-terminal amino acid, Xaa, from a peptide or arylamide. Xaa is preferably Glu or Asp but may be other amino acids, including Leu, Met, His, Cys and Gln.. Functionally, probably plays an important role in intracellular peptide degradation. This chain is Peptidase B, found in Yersinia pestis bv. Antiqua (strain Antiqua).